Consider the following 382-residue polypeptide: uncharacterized protein (382 aa).

12 helical membrane-spanning segments follow: residues 14–34, 45–65, 75–95, 102–122, 131–151, 157–177, 206–226, 235–255, 270–290, 291–311, 325–345, and 348–368; these read GLLL…LWLA, VVSS…GYVI, YLAS…IGFW, FVAG…LMCS, LLAA…LLVS, LMSV…PLLF, VNGC…MPLF, ASIG…QWPI, VQVF…AMAP, ALFI…AWAC, ALLL…AMLM, and FSDN…LLML.

Belongs to the major facilitator superfamily. YcaD (TC 2.A.1.26) family.

The protein localises to the cell inner membrane. This is an uncharacterized protein from Escherichia coli O17:K52:H18 (strain UMN026 / ExPEC).